The primary structure comprises 375 residues: Peroxisomal targeting signal 2 receptor (375 aa).

WD repeat units lie at residues 58 to 89, 102 to 133, 172 to 203, 218 to 249, 281 to 312, and 340 to 372; these read LTQDCLFDLAWNESHENQVLVAQGDGTLRLFD, EHEREVFSCNWNLVNRQNFLSSSWDGSIKIWS, KNRNCVYQAQFSPHDQNLVLSCSGNSYASLFD, HSGLEALTCDFNKYRPYVVATGGVDNAIRIWD, AHGLAIRKVTWSPHHSNILMSASYDMTCRIWR, and QHSEFVFGADWSLWGKPGYVASTAWDGNLFVWN.

Belongs to the WD repeat peroxin-7 family. As to quaternary structure, interacts with PEX21.

The protein localises to the cytoplasm. The protein resides in the cytosol. It localises to the peroxisome matrix. In terms of biological role, receptor required for the peroxisomal import of proteins containing a C-terminal PTS2-type peroxisomal targeting signal, such as 3-oxoacyl-CoA thiolase. Specifically binds to cargo proteins containing a PTS2 peroxisomal targeting signal in the cytosol. Cargo protein-binding triggers interaction with PEX21 and formation of a ternary complex composed of PEX21 and PEX7 along with PTS2-containing cargo proteins, which is tranlocated into peroxisomes by passing through the PEX13-PEX14 docking complex. The sequence is that of Peroxisomal targeting signal 2 receptor from Saccharomyces cerevisiae (strain ATCC 204508 / S288c) (Baker's yeast).